A 92-amino-acid polypeptide reads, in one-letter code: Muconolactone Delta-isomerase (92 aa).

It belongs to the muconolactone Delta-isomerase family. As to quaternary structure, homodecamer.

It catalyses the reaction (S)-muconolactone = (4,5-dihydro-5-oxofuran-2-yl)-acetate. It functions in the pathway aromatic compound metabolism; beta-ketoadipate pathway; 5-oxo-4,5-dihydro-2-furylacetate from catechol: step 3/3. In Cupriavidus pinatubonensis (strain JMP 134 / LMG 1197) (Cupriavidus necator (strain JMP 134)), this protein is Muconolactone Delta-isomerase (catC).